The primary structure comprises 331 residues: Pseudouridylate synthase TRUB2, mitochondrial (331 aa).

Residue Asp98 is the Nucleophile of the active site. The interval 309–331 (STGQPWGLKDPSSTLELESCSGQ) is disordered. Polar residues predominate over residues 319 to 331 (PSSTLELESCSGQ).

This sequence belongs to the pseudouridine synthase TruB family. In terms of assembly, forms a regulatory protein-RNA complex, consisting of RCC1L, NGRN, RPUSD3, RPUSD4, TRUB2, FASTKD2 and 16S mt-rRNA.

It localises to the mitochondrion matrix. The enzyme catalyses a uridine in mRNA = a pseudouridine in mRNA. It carries out the reaction uridine(55) in tRNA = pseudouridine(55) in tRNA. In terms of biological role, minor enzyme contributing to the isomerization of uridine to pseudouridine (pseudouridylation) of specific mitochondrial mRNAs (mt-mRNAs) such as COXI and COXIII mt-mRNAs. As a component of a functional protein-RNA module, consisting of RCC1L, NGRN, RPUSD3, RPUSD4, TRUB2, FASTKD2 and 16S mitochondrial ribosomal RNA (16S mt-rRNA), controls 16S mt-rRNA abundance and is required for intra-mitochondrial translation. Also catalyzes pseudouridylation of some tRNAs, including synthesis of pseudouridine(55) from uracil-55, in the psi GC loop of a subset of tRNAs. This chain is Pseudouridylate synthase TRUB2, mitochondrial, found in Mus musculus (Mouse).